Here is a 127-residue protein sequence, read N- to C-terminus: Large ribosomal subunit protein bL17 (127 aa).

This sequence belongs to the bacterial ribosomal protein bL17 family. As to quaternary structure, part of the 50S ribosomal subunit. Contacts protein L32.

The chain is Large ribosomal subunit protein bL17 from Escherichia fergusonii (strain ATCC 35469 / DSM 13698 / CCUG 18766 / IAM 14443 / JCM 21226 / LMG 7866 / NBRC 102419 / NCTC 12128 / CDC 0568-73).